The primary structure comprises 343 residues: Tetraacyldisaccharide 4'-kinase (343 aa).

His51 to Thr58 contacts ATP.

It belongs to the LpxK family.

The catalysed reaction is a lipid A disaccharide + ATP = a lipid IVA + ADP + H(+). It functions in the pathway glycolipid biosynthesis; lipid IV(A) biosynthesis; lipid IV(A) from (3R)-3-hydroxytetradecanoyl-[acyl-carrier-protein] and UDP-N-acetyl-alpha-D-glucosamine: step 6/6. In terms of biological role, transfers the gamma-phosphate of ATP to the 4'-position of a tetraacyldisaccharide 1-phosphate intermediate (termed DS-1-P) to form tetraacyldisaccharide 1,4'-bis-phosphate (lipid IVA). In Rhodopseudomonas palustris (strain BisB18), this protein is Tetraacyldisaccharide 4'-kinase.